Consider the following 438-residue polypeptide: Aspartic proteinase nepenthesin-2 (438 aa).

The signal sequence occupies residues 1 to 24 (MASPLYSVVLGLAIVSAIVAPTSS). Positions 25–79 (TSRGTLLHHGQKRPQPGLRVDLEQVDSGKNLTKYELIKRAIKRGERRMRSINAML) are cleaved as a propeptide — activation peptide. N54 carries N-linked (GlcNAc...) asparagine glycosylation. Positions 96–431 (YLMNVAIGTP…DLQNLAVSFV (336 aa)) constitute a Peptidase A1 domain. The active site involves D114. Disulfide bonds link C124–C127, C130–C204, C151–C169, C156–C164, C241–C435, and C354–C395. D315 is an active-site residue.

It belongs to the peptidase A1 family.

It localises to the secreted. The catalysed reaction is Similar to pepsin, but also cleaves on either side of Asp and at Lys-|-Arg.. Its activity is regulated as follows. Inhibited by pepstatin and by diazoacetyl-D,L-norleucine methyl ester (DAN) in the presence of Cu(2+) ions. Extracellular proteinase found in the pitcher fluid of carnivorous plants. Digest prey for nitrogen uptake. This is Aspartic proteinase nepenthesin-2 (nep2) from Nepenthes gracilis (Slender pitcher plant).